Here is a 57-residue protein sequence, read N- to C-terminus: Large ribosomal subunit protein bL32 (57 aa).

Positions 1–19 are enriched in basic residues; it reads MAVPKRRKSRSNTRSRRSQ. A disordered region spans residues 1 to 22; the sequence is MAVPKRRKSRSNTRSRRSQWKA.

It belongs to the bacterial ribosomal protein bL32 family.

In Mycobacterium tuberculosis (strain ATCC 25177 / H37Ra), this protein is Large ribosomal subunit protein bL32.